A 191-amino-acid chain; its full sequence is Probable GTP-binding protein EngB (191 aa).

The region spanning 22 to 191 (DFDHFLILGR…KLINEEFSNE (170 aa)) is the EngB-type G domain. GTP is bound by residues 30–37 (GRSNVGKS), 57–61 (GKTIT), 75–78 (DAPG), 142–145 (TKYD), and 172–174 (TSS). 2 residues coordinate Mg(2+): Ser37 and Thr59.

Belongs to the TRAFAC class TrmE-Era-EngA-EngB-Septin-like GTPase superfamily. EngB GTPase family. Mg(2+) is required as a cofactor.

Functionally, necessary for normal cell division and for the maintenance of normal septation. The protein is Probable GTP-binding protein EngB of Acholeplasma laidlawii (strain PG-8A).